Consider the following 151-residue polypeptide: Putative transcriptional regulatory protein TK2151 (151 aa).

This sequence belongs to the Tfx family.

Putative transcriptional regulator. This Thermococcus kodakarensis (strain ATCC BAA-918 / JCM 12380 / KOD1) (Pyrococcus kodakaraensis (strain KOD1)) protein is Putative transcriptional regulatory protein TK2151.